A 216-amino-acid polypeptide reads, in one-letter code: Ras-related protein Rab11A (216 aa).

GTP-binding positions include 19–27 (GDSGVGKSN), 38–44 (CLESKST), 67–71 (DTAGQ), 125–128 (NKSD), and 155–157 (SAL). The short motif at 41–49 (SKSTIGVEF) is the Effector region element. S-geranylgeranyl cysteine attachment occurs at residues Cys213 and Cys214.

The protein belongs to the small GTPase superfamily. Rab family.

The protein resides in the cell membrane. The sequence is that of Ras-related protein Rab11A (RAB11A) from Nicotiana tabacum (Common tobacco).